The chain runs to 120 residues: NAD(P)H-quinone oxidoreductase subunit 3 (120 aa).

3 helical membrane-spanning segments follow: residues 10 to 30 (FLGFLIIAAAVPILALVTNLI), 64 to 84 (MFALVFVIFDVETVFLYPWAV), and 89 to 109 (LGLLAFIEALIFITILVIALA).

The protein belongs to the complex I subunit 3 family. NDH-1 can be composed of about 15 different subunits; different subcomplexes with different compositions have been identified which probably have different functions.

The protein localises to the cellular thylakoid membrane. It carries out the reaction a plastoquinone + NADH + (n+1) H(+)(in) = a plastoquinol + NAD(+) + n H(+)(out). The catalysed reaction is a plastoquinone + NADPH + (n+1) H(+)(in) = a plastoquinol + NADP(+) + n H(+)(out). In terms of biological role, NDH-1 shuttles electrons from an unknown electron donor, via FMN and iron-sulfur (Fe-S) centers, to quinones in the respiratory and/or the photosynthetic chain. The immediate electron acceptor for the enzyme in this species is believed to be plastoquinone. Couples the redox reaction to proton translocation, and thus conserves the redox energy in a proton gradient. Cyanobacterial NDH-1 also plays a role in inorganic carbon-concentration. The polypeptide is NAD(P)H-quinone oxidoreductase subunit 3 (Prochlorococcus marinus subsp. pastoris (strain CCMP1986 / NIES-2087 / MED4)).